The primary structure comprises 211 residues: MRVRKRKGAEEHLANNPHYVILNPEDAKGRWHDVFGNDRPIHIEVGSGKGGFITGMALKNPDINYIGIDIQLSVLSYALDKVLASEVPNVKLLRVDGSSLTNYFEDGEVDMMYLNFSDPWPKTKHEKRRLTYKDFLDTYKRILPEHGEIHFKTDNRGLFEYSLASFSQYGMTLRQIWLDLHASNYEGNVMTEYEEKFSNKGQVIYRVEANF.

Glu-44, Asp-69, Asp-96, and Asp-118 together coordinate S-adenosyl-L-methionine. Asp-118 is an active-site residue. Lys-122 lines the substrate pocket. Residues 124–129 form an interaction with RNA region; the sequence is KHEKRR. Substrate is bound by residues Asp-154 and 191-194; that span reads TEYE.

It belongs to the class I-like SAM-binding methyltransferase superfamily. TrmB family.

The catalysed reaction is guanosine(46) in tRNA + S-adenosyl-L-methionine = N(7)-methylguanosine(46) in tRNA + S-adenosyl-L-homocysteine. Its pathway is tRNA modification; N(7)-methylguanine-tRNA biosynthesis. Its function is as follows. Catalyzes the formation of N(7)-methylguanine at position 46 (m7G46) in tRNA. The protein is tRNA (guanine-N(7)-)-methyltransferase of Streptococcus pyogenes serotype M12 (strain MGAS2096).